The following is a 66-amino-acid chain: Large ribosomal subunit protein uL29 (66 aa).

Belongs to the universal ribosomal protein uL29 family.

This Lysinibacillus sphaericus (strain C3-41) protein is Large ribosomal subunit protein uL29.